The chain runs to 128 residues: MFTIYTYLAPIVAMVLVVLNYLISNNNSYIEKDGPFECGFTSYQQTRSAFSVAFILVAILFLPFDLEMSSILPYVVSAYSNGTYGLSILVIFLLSLVIAFVYEINLGALNLERRYTPIVKPLMNKLYL.

3 helical membrane-spanning segments follow: residues 3-23 (TIYT…NYLI), 52-72 (VAFI…SSIL), and 84-104 (YGLS…VYEI).

The protein belongs to the complex I subunit 3 family.

It localises to the mitochondrion membrane. It catalyses the reaction a ubiquinone + NADH + 5 H(+)(in) = a ubiquinol + NAD(+) + 4 H(+)(out). Functionally, core subunit of the mitochondrial membrane respiratory chain NADH dehydrogenase (Complex I) that is believed to belong to the minimal assembly required for catalysis. Complex I functions in the transfer of electrons from NADH to the respiratory chain. The immediate electron acceptor for the enzyme is believed to be ubiquinone. The polypeptide is NADH-ubiquinone oxidoreductase chain 3 (ND3) (Debaryomyces hansenii (strain ATCC 36239 / CBS 767 / BCRC 21394 / JCM 1990 / NBRC 0083 / IGC 2968) (Yeast)).